A 275-amino-acid polypeptide reads, in one-letter code: Transcriptional coregulator psa-3 (275 aa).

The 71-residue stretch at 91-161 (TDDIKRLFQS…RRTVCHEALV (71 aa)) folds into the MEIS N-terminal domain. The segment at 239–275 (QLPPNFLKPSNEKSPEKSEEEKSQKPSSSPKSPSLSD) is disordered. The segment covering 248–262 (SNEKSPEKSEEEKSQ) has biased composition (basic and acidic residues). Residues 263-275 (KPSSSPKSPSLSD) show a composition bias toward low complexity.

As to quaternary structure, interacts with homeobox protein ceh-20; the interaction is direct, facilitates nuclear localization of ceh-20 and may stabilize interaction of a ceh-20-nob-1 complex with DNA.

It is found in the nucleus. Functionally, probable transcription coregulator. Required for asymmetric cell divisions of the T hypodermal cells, and cell fate determination, in concert with homeobox proteins nob-1 and ceh-20. Acts downstream of the Wnt signaling pathway, and of ceh-20 and nob-1. The protein is Transcriptional coregulator psa-3 of Caenorhabditis elegans.